The chain runs to 265 residues: Sarcotoxin II-1 (265 aa).

Positions 1–22 (MKSFVLFAACMAIIALGSLAHA) are cleaved as a signal peptide. Residues 23–24 (YP) constitute a propeptide, removed by a dipeptidylpeptidase. Residue Gln-25 is modified to Pyrrolidone carboxylic acid. Gly-264 carries the glycine amide modification.

Belongs to the attacin/sarcotoxin-2 family. As to expression, synthesized by the fat body and is eventually secreted into the hemolymph.

It is found in the secreted. Sarcotoxin II is an antibacterial protein which plays a role in the inflammatory response of this insect. The main effect of sarcotoxin II on E.coli may be the inhibition of cell wall synthesis, including septum formation. The polypeptide is Sarcotoxin II-1 (Sarcophaga peregrina (Flesh fly)).